A 202-amino-acid polypeptide reads, in one-letter code: Nuclear transcription factor Y subunit C-6 (202 aa).

The span at 1–16 shows a compositional bias: low complexity; it reads MAENNNNNGDNMNNDN. Disordered stretches follow at residues 1 to 29 and 180 to 202; these read MAENNNNNGDNMNNDNHQQPPSYSQLPPM and AWPAAAGDGEDDAEDNGGNGGGN. Over residues 17–29 the composition is skewed to polar residues; sequence HQQPPSYSQLPPM.

This sequence belongs to the NFYC/HAP5 subunit family. Heterotrimeric transcription factor composed of three components, NF-YA, NF-YB and NF-YC. NF-YB and NF-YC must interact and dimerize for NF-YA association and DNA binding. Expressed in flowers and siliques.

It is found in the nucleus. Its function is as follows. Stimulates the transcription of various genes by recognizing and binding to a CCAAT motif in promoters. This is Nuclear transcription factor Y subunit C-6 (NFYC6) from Arabidopsis thaliana (Mouse-ear cress).